Consider the following 339-residue polypeptide: Protein H339R (339 aa).

It belongs to the asfivirus H339R family. As to quaternary structure, interacts with NACA (alpha chain of nascent polypeptide-associated complex).

Its subcellular location is the host cytoplasm. It is found in the host nucleus. The protein resides in the virion. This is Protein H339R from African swine fever virus (isolate Warthog/Namibia/Wart80/1980) (ASFV).